The primary structure comprises 420 residues: Protein BDLF2 (420 aa).

Disordered regions lie at residues 1-21 (MVDEQVAVEHGTVSHTISREE) and 64-129 (AAAV…GGQR). At 1–184 (MVDEQVAVEH…AETLAEPPRC (184 aa)) the chain is on the intravirion side. Positions 92-108 (TNTQDQNQNQTTRARTN) are enriched in low complexity. A helical; Signal-anchor for type II membrane protein membrane pass occupies residues 185-205 (FMLSFVFIYYCCYLAFLALLA). Residues 206–420 (FGFNPLFLPS…LEEVMYVMVQ (215 aa)) are Virion surface-facing. 6 N-linked (GlcNAc...) asparagine; by host glycosylation sites follow: Asn258, Asn264, Asn300, Asn304, Asn371, and Asn384.

The protein belongs to the herpesviridae BDLF2 family. Interacts with BMRF2.

Its subcellular location is the virion membrane. Its function is as follows. Rearranges cellular actin to increase intercellular contacts and thereby promote virus cell-to-cell spreading. Induce the outgrowth of long, branched plasma membrane fronds to create intercellular network for virion traffic. The fronds are actin based and RhoA-dependent. The chain is Protein BDLF2 from Epstein-Barr virus (strain GD1) (HHV-4).